The sequence spans 265 residues: Hydroxyethylthiazole kinase (265 aa).

Substrate is bound at residue Met-50. Positions 125 and 171 each coordinate ATP. Gly-198 contributes to the substrate binding site.

The protein belongs to the Thz kinase family. Requires Mg(2+) as cofactor.

The catalysed reaction is 5-(2-hydroxyethyl)-4-methylthiazole + ATP = 4-methyl-5-(2-phosphooxyethyl)-thiazole + ADP + H(+). It participates in cofactor biosynthesis; thiamine diphosphate biosynthesis; 4-methyl-5-(2-phosphoethyl)-thiazole from 5-(2-hydroxyethyl)-4-methylthiazole: step 1/1. In terms of biological role, catalyzes the phosphorylation of the hydroxyl group of 4-methyl-5-beta-hydroxyethylthiazole (THZ). The protein is Hydroxyethylthiazole kinase of Salmonella arizonae (strain ATCC BAA-731 / CDC346-86 / RSK2980).